The following is a 187-amino-acid chain: Glutathione peroxidase 7 (187 aa).

A signal peptide spans 1-19 (MVAATVAAAWLLLWAAACA). Cys57 is a catalytic residue.

It belongs to the glutathione peroxidase family. Expressed in esophageal epithelial cells; expression is up-regulated after exposure to acidic bile acids.

It is found in the secreted. The enzyme catalyses 2 glutathione + H2O2 = glutathione disulfide + 2 H2O. It protects esophageal epithelia from hydrogen peroxide-induced oxidative stress. It suppresses acidic bile acid-induced reactive oxygen species (ROS) and protects against oxidative DNA damage and double-strand breaks. This Homo sapiens (Human) protein is Glutathione peroxidase 7 (GPX7).